The primary structure comprises 130 residues: Small ribosomal subunit protein uS9 (130 aa).

The protein belongs to the universal ribosomal protein uS9 family.

In Bordetella avium (strain 197N), this protein is Small ribosomal subunit protein uS9.